Here is a 100-residue protein sequence, read N- to C-terminus: Urease subunit gamma (100 aa).

The protein belongs to the urease gamma subunit family. Heterotrimer of UreA (gamma), UreB (beta) and UreC (alpha) subunits. Three heterotrimers associate to form the active enzyme.

It localises to the cytoplasm. The enzyme catalyses urea + 2 H2O + H(+) = hydrogencarbonate + 2 NH4(+). Its pathway is nitrogen metabolism; urea degradation; CO(2) and NH(3) from urea (urease route): step 1/1. This Prochlorococcus marinus (strain MIT 9215) protein is Urease subunit gamma.